The chain runs to 312 residues: Glyoxylate/hydroxypyruvate reductase A (312 aa).

Residue Arg227 is part of the active site. His275 acts as the Proton donor in catalysis.

This sequence belongs to the D-isomer specific 2-hydroxyacid dehydrogenase family. GhrA subfamily.

It localises to the cytoplasm. The catalysed reaction is glycolate + NADP(+) = glyoxylate + NADPH + H(+). It carries out the reaction (R)-glycerate + NAD(+) = 3-hydroxypyruvate + NADH + H(+). It catalyses the reaction (R)-glycerate + NADP(+) = 3-hydroxypyruvate + NADPH + H(+). Catalyzes the NADPH-dependent reduction of glyoxylate and hydroxypyruvate into glycolate and glycerate, respectively. This is Glyoxylate/hydroxypyruvate reductase A from Shigella dysenteriae serotype 1 (strain Sd197).